Reading from the N-terminus, the 198-residue chain is Recombination protein RecR (198 aa).

The C4-type zinc finger occupies 57–72 (CSVCGHITDQDPCAIC). The Toprim domain maps to 80–175 (SLICVVQDPK…RTTRIAHGLP (96 aa)).

The protein belongs to the RecR family.

May play a role in DNA repair. It seems to be involved in an RecBC-independent recombinational process of DNA repair. It may act with RecF and RecO. The chain is Recombination protein RecR from Oceanobacillus iheyensis (strain DSM 14371 / CIP 107618 / JCM 11309 / KCTC 3954 / HTE831).